Consider the following 324-residue polypeptide: Ribose 1,5-bisphosphate isomerase (324 aa).

Residues 22-25 (RGAG) and arginine 65 contribute to the substrate site. Cysteine 135 acts as the Proton acceptor in catalysis. Substrate is bound at residue 137–139 (SKA). Aspartate 204 serves as the catalytic Proton donor. Substrate contacts are provided by residues 214–215 (NK) and lysine 240.

It belongs to the eIF-2B alpha/beta/delta subunits family. R15P isomerase subfamily.

The catalysed reaction is alpha-D-ribose 1,5-bisphosphate = D-ribulose 1,5-bisphosphate. Catalyzes the isomerization of ribose 1,5-bisphosphate (R15P) to ribulose 1,5-bisphosphate (RuBP), the CO(2) acceptor and substrate for RubisCO. Functions in an archaeal AMP degradation pathway, together with AMP phosphorylase and RubisCO. The polypeptide is Ribose 1,5-bisphosphate isomerase (Pyrococcus horikoshii (strain ATCC 700860 / DSM 12428 / JCM 9974 / NBRC 100139 / OT-3)).